Here is a 229-residue protein sequence, read N- to C-terminus: MSDALTLPAEARERAGKGASRALRREGRVPAVIYGGKEEPTMIHVEEKLLIKQLMTGHFMNSIVEIEIGGKTVRTLPKDVALHPVSDRPEHADFFRLAKGGKIEVSVPVVFMNEEASPGLKKGGVLNVVRHELELVCENDKIPGEIEIDVTGKEVGDSIHISEITLPEGSESAITDRDFTIATLVAPSALKKAEGSEEEEDGEEVDADAVPATEQEGEDGDGEESKGDD.

Disordered regions lie at residues 1–21 (MSDA…GASR) and 187–229 (PSAL…KGDD). Residues 196 to 207 (SEEEEDGEEVDA) are compositionally biased toward acidic residues.

The protein belongs to the bacterial ribosomal protein bL25 family. CTC subfamily. In terms of assembly, part of the 50S ribosomal subunit; part of the 5S rRNA/L5/L18/L25 subcomplex. Contacts the 5S rRNA. Binds to the 5S rRNA independently of L5 and L18.

In terms of biological role, this is one of the proteins that binds to the 5S RNA in the ribosome where it forms part of the central protuberance. The sequence is that of Large ribosomal subunit protein bL25 from Erythrobacter litoralis (strain HTCC2594).